The chain runs to 283 residues: Elongation factor Ts (283 aa).

The involved in Mg(2+) ion dislocation from EF-Tu stretch occupies residues 80 to 83 (TDFV).

It belongs to the EF-Ts family.

The protein localises to the cytoplasm. Functionally, associates with the EF-Tu.GDP complex and induces the exchange of GDP to GTP. It remains bound to the aminoacyl-tRNA.EF-Tu.GTP complex up to the GTP hydrolysis stage on the ribosome. The protein is Elongation factor Ts of Actinobacillus pleuropneumoniae serotype 5b (strain L20).